The chain runs to 163 residues: Endoribonuclease YbeY (163 aa).

Positions 121, 125, and 131 each coordinate Zn(2+).

This sequence belongs to the endoribonuclease YbeY family. Zn(2+) is required as a cofactor.

The protein localises to the cytoplasm. Single strand-specific metallo-endoribonuclease involved in late-stage 70S ribosome quality control and in maturation of the 3' terminus of the 16S rRNA. This Synechococcus sp. (strain JA-3-3Ab) (Cyanobacteria bacterium Yellowstone A-Prime) protein is Endoribonuclease YbeY.